We begin with the raw amino-acid sequence, 255 residues long: Triosephosphate isomerase (255 aa).

Substrate is bound at residue 9-11; that stretch reads NWK. Catalysis depends on histidine 100, which acts as the Electrophile. The active-site Proton acceptor is glutamate 169. Residues glycine 175, serine 208, and 229-230 contribute to the substrate site; that span reads GG.

This sequence belongs to the triosephosphate isomerase family. As to quaternary structure, homodimer.

Its subcellular location is the cytoplasm. The enzyme catalyses D-glyceraldehyde 3-phosphate = dihydroxyacetone phosphate. Its pathway is carbohydrate biosynthesis; gluconeogenesis. It functions in the pathway carbohydrate degradation; glycolysis; D-glyceraldehyde 3-phosphate from glycerone phosphate: step 1/1. Functionally, involved in the gluconeogenesis. Catalyzes stereospecifically the conversion of dihydroxyacetone phosphate (DHAP) to D-glyceraldehyde-3-phosphate (G3P). The sequence is that of Triosephosphate isomerase from Synechococcus sp. (strain JA-3-3Ab) (Cyanobacteria bacterium Yellowstone A-Prime).